Reading from the N-terminus, the 109-residue chain is Large ribosomal subunit protein uL24 (109 aa).

It belongs to the universal ribosomal protein uL24 family. Part of the 50S ribosomal subunit.

One of two assembly initiator proteins, it binds directly to the 5'-end of the 23S rRNA, where it nucleates assembly of the 50S subunit. Functionally, one of the proteins that surrounds the polypeptide exit tunnel on the outside of the subunit. This is Large ribosomal subunit protein uL24 from Rickettsia bellii (strain RML369-C).